The sequence spans 445 residues: Tubby-like F-box protein 10 (445 aa).

One can recognise an F-box domain in the interval Ser57–Gly112. Positions Pro382 to Ala398 are enriched in low complexity. Residues Pro382–Glu401 form a disordered region.

This sequence belongs to the TUB family. In terms of assembly, part of a SCF (ASK-cullin-F-box) protein ligase complex. Interacts with SKP1A/ASK1. As to expression, ubiquitous.

It localises to the nucleus. It participates in protein modification; protein ubiquitination. Component of SCF(ASK-cullin-F-box) E3 ubiquitin ligase complexes, which may mediate the ubiquitination and subsequent proteasomal degradation of target proteins. The polypeptide is Tubby-like F-box protein 10 (Arabidopsis thaliana (Mouse-ear cress)).